The primary structure comprises 277 residues: Phosphatidylglycerol--prolipoprotein diacylglyceryl transferase (277 aa).

The next 4 helical transmembrane spans lie at 15-35 (IHVR…TFMS), 50-70 (IDLL…YYVI), 89-109 (GGIA…VFCY), and 112-132 (FLPP…AQVL). A 1,2-diacyl-sn-glycero-3-phospho-(1'-sn-glycerol) is bound at residue R134. 3 consecutive transmembrane segments (helical) span residues 174–194 (KPTF…ILSL), 204–224 (GEVF…VEGM), and 234–254 (VIRV…ILFV).

Belongs to the Lgt family.

The protein resides in the cell membrane. The enzyme catalyses L-cysteinyl-[prolipoprotein] + a 1,2-diacyl-sn-glycero-3-phospho-(1'-sn-glycerol) = an S-1,2-diacyl-sn-glyceryl-L-cysteinyl-[prolipoprotein] + sn-glycerol 1-phosphate + H(+). The protein operates within protein modification; lipoprotein biosynthesis (diacylglyceryl transfer). Functionally, catalyzes the transfer of the diacylglyceryl group from phosphatidylglycerol to the sulfhydryl group of the N-terminal cysteine of a prolipoprotein, the first step in the formation of mature lipoproteins. The protein is Phosphatidylglycerol--prolipoprotein diacylglyceryl transferase of Lactobacillus delbrueckii subsp. bulgaricus (strain ATCC 11842 / DSM 20081 / BCRC 10696 / JCM 1002 / NBRC 13953 / NCIMB 11778 / NCTC 12712 / WDCM 00102 / Lb 14).